The following is a 220-amino-acid chain: Adenylate kinase (220 aa).

13-18 (GAGKGT) is an ATP binding site. The interval 33–62 (ATGDMLRSQVARQTELGKEAKKIMDQGGLV) is NMP. AMP-binding positions include T34, R39, 60 to 62 (GLV), 89 to 92 (GFPR), and Q96. Positions 130-167 (GRLVHPGSGRSYHLEFNPPKVPMKDDVTGEPLIQRSDD) are LID. ATP contacts are provided by residues R131 and 140–141 (SY). R164 and R175 together coordinate AMP. Q203 provides a ligand contact to ATP.

This sequence belongs to the adenylate kinase family. AK2 subfamily. As to quaternary structure, monomer.

It localises to the cytoplasm. It is found in the cytosol. Its subcellular location is the mitochondrion intermembrane space. The protein localises to the nucleus. It catalyses the reaction AMP + ATP = 2 ADP. Its function is as follows. Catalyzes the reversible transfer of the terminal phosphate group between ATP and AMP. Plays an important role in cellular energy homeostasis and in adenine nucleotide metabolism. Adenylate kinase activity is critical for regulation of the phosphate utilization and the AMP de novo biosynthesis pathways. The protein is Adenylate kinase (adk1) of Schizosaccharomyces pombe (strain 972 / ATCC 24843) (Fission yeast).